The following is a 450-amino-acid chain: tRNA modification GTPase MnmE (450 aa).

Residues Arg-24, Glu-82, and Lys-121 each coordinate (6S)-5-formyl-5,6,7,8-tetrahydrofolate. In terms of domain architecture, TrmE-type G spans 218 to 375; that stretch reads GMHVVLVGQP…LRQVLLEAVG (158 aa). Asn-228 serves as a coordination point for K(+). GTP-binding positions include 228–233, 247–253, 272–275, and 356–358; these read NVGKSS, TDIAGTT, DTAG, and SAR. Ser-232 provides a ligand contact to Mg(2+). Positions 247, 249, and 252 each coordinate K(+). Residue Thr-253 coordinates Mg(2+). Lys-450 is a (6S)-5-formyl-5,6,7,8-tetrahydrofolate binding site.

It belongs to the TRAFAC class TrmE-Era-EngA-EngB-Septin-like GTPase superfamily. TrmE GTPase family. In terms of assembly, homodimer. Heterotetramer of two MnmE and two MnmG subunits. Requires K(+) as cofactor.

It localises to the cytoplasm. In terms of biological role, exhibits a very high intrinsic GTPase hydrolysis rate. Involved in the addition of a carboxymethylaminomethyl (cmnm) group at the wobble position (U34) of certain tRNAs, forming tRNA-cmnm(5)s(2)U34. The protein is tRNA modification GTPase MnmE of Laribacter hongkongensis (strain HLHK9).